The primary structure comprises 179 residues: Shikimate kinase (179 aa).

Residue 14 to 19 (GAGKTT) coordinates ATP. Thr18 is a Mg(2+) binding site. Positions 36, 60, and 82 each coordinate substrate. ATP is bound at residue Arg120. Residue Arg139 coordinates substrate.

It belongs to the shikimate kinase family. As to quaternary structure, monomer. It depends on Mg(2+) as a cofactor.

Its subcellular location is the cytoplasm. It catalyses the reaction shikimate + ATP = 3-phosphoshikimate + ADP + H(+). It participates in metabolic intermediate biosynthesis; chorismate biosynthesis; chorismate from D-erythrose 4-phosphate and phosphoenolpyruvate: step 5/7. Catalyzes the specific phosphorylation of the 3-hydroxyl group of shikimic acid using ATP as a cosubstrate. The protein is Shikimate kinase of Methylococcus capsulatus (strain ATCC 33009 / NCIMB 11132 / Bath).